Here is a 354-residue protein sequence, read N- to C-terminus: MAQLKYNKDIDELERNAAKWWPDFLAKKESSTSIIPKLVESQDAFISLLNLSKNNPFDIFQLIDASKFPPNLFLKHLVVLTDFGGEPLNRLNQNFDSLFPMIPYGIHYITKVLGKFEFFWNEKKYEYVFQELPVTSLTNSKLKIDGASISKTVPLSDLYKDVIVLLMFGANAVNSEVSEVLMKCEVGNLIGKTDELKKFIKERYIFVSRITGGAEANTLGQVAQTHVIDFLRTRFGSKGHDIKSNGHIEGVTHNDGQTLTTFDVVIKKGSKSVAIEISFQVTTNSTIERKAGQAKARYDMVSDTGNYIAYIIDGAGNFQRKNAITTICNNSHCTVAYTEEELNVLLKFILEKLE.

As to quaternary structure, homodimer.

It catalyses the reaction Endonucleolytic cleavage of DNA to give specific double-stranded fragments with terminal 5'-phosphates.. Its function is as follows. A P subtype restriction enzyme that recognizes the double-stranded sequence 5'-GGYRCC-3' and cleaves after G-1. The polypeptide is Type II restriction enzyme BanI (banIR) (Aneurinibacillus aneurinilyticus (Bacillus aneurinolyticus)).